The primary structure comprises 1327 residues: ABC transporter 1 (1327 aa).

A run of 6 helical transmembrane segments spans residues 47–67, 100–120, 170–190, 195–215, 228–248, and 276–296; these read LGIL…IIFG, VYVG…WNLF, KVGI…IAFV, LGGE…VGGY, VAGA…VHAF, and VAVQ…LAFW. Residues 47–326 enclose the ABC transmembrane type-1 1 domain; the sequence is LGILAAIASG…TTYTVIFLLV (280 aa). 3 N-linked (GlcNAc...) asparagine glycosylation sites follow: N381, N390, and N406. Residues 386–663 form the ABC transporter 1 domain; the sequence is IELNNVSFAF…DGAYAGLVRL (278 aa). Residue 421–428 coordinates ATP; it reads GLSGSGKS. N463 and N674 each carry an N-linked (GlcNAc...) asparagine glycan. 6 helical membrane-spanning segments follow: residues 743 to 763, 785 to 805, 859 to 881, 888 to 910, 971 to 991, and 1005 to 1025; these read FLAL…AVVF, FYGL…LGSW, LTGS…IALS, IALV…VITM, LWLA…YWWG, and FFIV…MFTL. One can recognise an ABC transmembrane type-1 2 domain in the interval 743-1031; it reads FLALTSAFVV…MFTLAPDVSR (289 aa). N1050 is a glycosylation site (N-linked (GlcNAc...) asparagine). The disordered stretch occupies residues 1054–1081; it reads PCQHLKPGNDLEANAEPREKRPDQSQGG. Residues 1084-1323 form the ABC transporter 2 domain; sequence VSLNNVKFSY…SESYKINALH (240 aa). Position 1119–1126 (1119–1126) interacts with ATP; sequence GPSGAGKS.

It belongs to the ABC transporter superfamily. ABCB family. Multidrug resistance exporter (TC 3.A.1.201) subfamily.

The protein localises to the membrane. Its function is as follows. ABC transporter; part of the gene cluster that mediates the biosynthesis of hydroxamate-containing siderophores that play a critical role in virulence via intracellular iron acquisition during macrophage infection. Probably involved in the excretion of the extracellular siderophores. The chain is ABC transporter 1 from Ajellomyces capsulatus (Darling's disease fungus).